A 230-amino-acid chain; its full sequence is Thymidylate kinase (230 aa).

20-27 (GGEGAGKS) is an ATP binding site.

Belongs to the thymidylate kinase family.

It catalyses the reaction dTMP + ATP = dTDP + ADP. Its function is as follows. Phosphorylation of dTMP to form dTDP in both de novo and salvage pathways of dTTP synthesis. In Rhodopseudomonas palustris (strain TIE-1), this protein is Thymidylate kinase.